Reading from the N-terminus, the 243-residue chain is MTNGPQPLYRRVLLKMSGEALMGKGLHAIDPNVLDRMAKDVTQVYQLGVQIAIVIGGGNFFRGAALQAAGINRITGDYMGMLATLMNALALRDAFERSNLPVRILSAIPMTGVADAFHRRKAIHHLQQGRVVIFAAGTGNPLVTTDSAASLRGIEINADVVLKATNVDGVYSDDPAKNPQAKLYKHLSYQEALKKELAVMDLAAFCQCRDYNMPLRVFNINKPGALLSVIMNQEEGTLVDQGQ.

15 to 18 (KMSG) is a binding site for ATP. Gly-57 provides a ligand contact to UMP. ATP is bound by residues Gly-58 and Arg-62. Residues Asp-77 and 138–145 (TGNPLVTT) each bind UMP. ATP contacts are provided by Thr-165, Asn-166, Tyr-171, and Asp-174.

The protein belongs to the UMP kinase family. In terms of assembly, homohexamer.

It localises to the cytoplasm. It catalyses the reaction UMP + ATP = UDP + ADP. Its pathway is pyrimidine metabolism; CTP biosynthesis via de novo pathway; UDP from UMP (UMPK route): step 1/1. Its activity is regulated as follows. Inhibited by UTP. Its function is as follows. Catalyzes the reversible phosphorylation of UMP to UDP. This is Uridylate kinase from Coxiella burnetii (strain RSA 493 / Nine Mile phase I).